The sequence spans 422 residues: MHIHKIQAREILDSRGNPTIEADVTLTTGIIGRASVPSGASTGSREACELRDNDPKRYAGKGVQKAVKHVNNEINQALQGLSVEDQENLDRILCQLDNTENKSHLGANAILATSLACARARALSLNQPLYMTLNQGDMMTMPVPMMNILNGGAHADNNVDIQEFMIMPIGAPDFPVALQMGTEIFHVLKSVLKKQGLNTAVGDEGGFAPNIQSNRQALDLLSEAIEKAGFRLGEDIVFALDVAASELFNEGFYHMYSENQKFDSHQLIEYYANLISSYPIVSIEDGLDEKDWSGWKQLTTHLGNKVQLVGDDLFVTNPKILREGIAQGIANAILIKVNQIGTLSETRQAIKLAYDNGYRCVMSHRSGETEDTFIADLAVASGCGQIKTGSLCRTDRTAKYNQLLRINELASLPYAGKNILKR.

Residue Ser-41 coordinates Mg(2+). (2R)-2-phosphoglycerate is bound at residue Glu-163. Glu-204 serves as the catalytic Proton donor. Asp-241, Glu-284, and Asp-311 together coordinate Mg(2+). The active-site Proton acceptor is the Lys-336. 3 residues coordinate (2R)-2-phosphoglycerate: Arg-365, Ser-366, and Lys-387.

It belongs to the enolase family. Homodimer. Component of the RNA degradosome, a multiprotein complex involved in RNA processing and mRNA degradation. It depends on Mg(2+) as a cofactor.

It is found in the cytoplasm. The protein resides in the secreted. The protein localises to the cell surface. The enzyme catalyses (2R)-2-phosphoglycerate = phosphoenolpyruvate + H2O. Its pathway is carbohydrate degradation; glycolysis; pyruvate from D-glyceraldehyde 3-phosphate: step 4/5. Its function is as follows. Catalyzes the reversible conversion of 2-phosphoglycerate (2-PG) into phosphoenolpyruvate (PEP). It is essential for the degradation of carbohydrates via glycolysis. This is Enolase from Legionella pneumophila subsp. pneumophila (strain Philadelphia 1 / ATCC 33152 / DSM 7513).